Consider the following 440-residue polypeptide: Tol-Pal system protein TolB (440 aa).

Residues 1–21 form the signal peptide; sequence MKIFGKWLLVTLLICSMPVKA.

It belongs to the TolB family. As to quaternary structure, the Tol-Pal system is composed of five core proteins: the inner membrane proteins TolA, TolQ and TolR, the periplasmic protein TolB and the outer membrane protein Pal. They form a network linking the inner and outer membranes and the peptidoglycan layer.

It is found in the periplasm. In terms of biological role, part of the Tol-Pal system, which plays a role in outer membrane invagination during cell division and is important for maintaining outer membrane integrity. The sequence is that of Tol-Pal system protein TolB from Shewanella halifaxensis (strain HAW-EB4).